The following is a 287-amino-acid chain: Small ribosomal subunit biogenesis GTPase RsgA (287 aa).

In terms of domain architecture, CP-type G spans 61–218 (ISQLKRPAVA…MVDTPGFSSL (158 aa)). Residues 110–113 (NKLD) and 161–169 (GPSGVGKST) contribute to the GTP site. 4 residues coordinate Zn(2+): C242, C247, H249, and C255.

Belongs to the TRAFAC class YlqF/YawG GTPase family. RsgA subfamily. In terms of assembly, monomer. Associates with 30S ribosomal subunit, binds 16S rRNA. Zn(2+) serves as cofactor.

The protein resides in the cytoplasm. Its function is as follows. One of several proteins that assist in the late maturation steps of the functional core of the 30S ribosomal subunit. Helps release RbfA from mature subunits. May play a role in the assembly of ribosomal proteins into the subunit. Circularly permuted GTPase that catalyzes slow GTP hydrolysis, GTPase activity is stimulated by the 30S ribosomal subunit. In Clostridium kluyveri (strain NBRC 12016), this protein is Small ribosomal subunit biogenesis GTPase RsgA.